Here is a 274-residue protein sequence, read N- to C-terminus: Dermonecrotic toxin SdSicTox-betaIIB1bvii (274 aa).

The active site involves H5. The Mg(2+) site is built by E25 and D27. The active-site Nucleophile is H41. 2 cysteine pairs are disulfide-bonded: C45–C51 and C47–C190. Position 85 (D85) interacts with Mg(2+).

Belongs to the arthropod phospholipase D family. Class II subfamily. The cofactor is Mg(2+). In terms of tissue distribution, expressed by the venom gland.

It is found in the secreted. It carries out the reaction an N-(acyl)-sphingosylphosphocholine = an N-(acyl)-sphingosyl-1,3-cyclic phosphate + choline. The enzyme catalyses an N-(acyl)-sphingosylphosphoethanolamine = an N-(acyl)-sphingosyl-1,3-cyclic phosphate + ethanolamine. The catalysed reaction is a 1-acyl-sn-glycero-3-phosphocholine = a 1-acyl-sn-glycero-2,3-cyclic phosphate + choline. It catalyses the reaction a 1-acyl-sn-glycero-3-phosphoethanolamine = a 1-acyl-sn-glycero-2,3-cyclic phosphate + ethanolamine. In terms of biological role, dermonecrotic toxins cleave the phosphodiester linkage between the phosphate and headgroup of certain phospholipids (sphingolipid and lysolipid substrates), forming an alcohol (often choline) and a cyclic phosphate. This toxin acts on sphingomyelin (SM). It may also act on ceramide phosphoethanolamine (CPE), lysophosphatidylcholine (LPC) and lysophosphatidylethanolamine (LPE), but not on lysophosphatidylserine (LPS), and lysophosphatidylglycerol (LPG). It acts by transphosphatidylation, releasing exclusively cyclic phosphate products as second products. Induces dermonecrosis, hemolysis, increased vascular permeability, edema, inflammatory response, and platelet aggregation. The polypeptide is Dermonecrotic toxin SdSicTox-betaIIB1bvii (Sicarius cf. damarensis (strain GJB-2008) (Six-eyed sand spider)).